Reading from the N-terminus, the 394-residue chain is Succinate--CoA ligase [ADP-forming] subunit beta (394 aa).

Residues 9-243 (KDILAGFGIA…YSQLNPLEIA (235 aa)) enclose the ATP-grasp domain. ATP-binding positions include Lys45, 52–54 (GRG), Glu98, Val101, and Glu106. Mg(2+) is bound by residues Asn198 and Asp212. Residues Asn263 and 320–322 (GIM) contribute to the substrate site.

Belongs to the succinate/malate CoA ligase beta subunit family. As to quaternary structure, heterotetramer of two alpha and two beta subunits. Mg(2+) serves as cofactor.

The enzyme catalyses succinate + ATP + CoA = succinyl-CoA + ADP + phosphate. It carries out the reaction GTP + succinate + CoA = succinyl-CoA + GDP + phosphate. Its pathway is carbohydrate metabolism; tricarboxylic acid cycle; succinate from succinyl-CoA (ligase route): step 1/1. Succinyl-CoA synthetase functions in the citric acid cycle (TCA), coupling the hydrolysis of succinyl-CoA to the synthesis of either ATP or GTP and thus represents the only step of substrate-level phosphorylation in the TCA. The beta subunit provides nucleotide specificity of the enzyme and binds the substrate succinate, while the binding sites for coenzyme A and phosphate are found in the alpha subunit. The polypeptide is Succinate--CoA ligase [ADP-forming] subunit beta (Pelobacter propionicus (strain DSM 2379 / NBRC 103807 / OttBd1)).